The chain runs to 301 residues: Probable alpha-L-glutamate ligase (301 aa).

The 184-residue stretch at 104-287 (LQLLSRRGIG…VAGMIIGYLE (184 aa)) folds into the ATP-grasp domain. Residues K141, 178–179 (EY), D187, and 211–213 (RSN) contribute to the ATP site. Mg(2+)-binding residues include D248, E260, and N262. Residues D248, E260, and N262 each coordinate Mn(2+).

This sequence belongs to the RimK family. It depends on Mg(2+) as a cofactor. Mn(2+) is required as a cofactor.

This Pseudomonas syringae pv. syringae (strain B728a) protein is Probable alpha-L-glutamate ligase.